Consider the following 568-residue polypeptide: Putative ABC transporter ATP-binding protein CPE1583 (568 aa).

2 ABC transporter domains span residues 7–248 (IEFK…GIRE) and 303–536 (LEFK…ASLK). ATP-binding positions include 41–48 (GPSGSGKS) and 336–343 (GKNGAGKS).

Belongs to the ABC transporter superfamily.

Its subcellular location is the cell membrane. Its function is as follows. Probably part of an ABC transporter complex. Responsible for energy coupling to the transport system. The protein is Putative ABC transporter ATP-binding protein CPE1583 of Clostridium perfringens (strain 13 / Type A).